We begin with the raw amino-acid sequence, 267 residues long: tRNA pseudouridine synthase A (267 aa).

The active-site Nucleophile is aspartate 51. Tyrosine 109 contributes to the substrate binding site.

The protein belongs to the tRNA pseudouridine synthase TruA family.

The enzyme catalyses uridine(38/39/40) in tRNA = pseudouridine(38/39/40) in tRNA. Functionally, formation of pseudouridine at positions 38, 39 and 40 in the anticodon stem and loop of transfer RNAs. This is tRNA pseudouridine synthase A from Methanothrix thermoacetophila (strain DSM 6194 / JCM 14653 / NBRC 101360 / PT) (Methanosaeta thermophila).